Here is a 627-residue protein sequence, read N- to C-terminus: (-)-beta-pinene synthase 1, chloroplastic (627 aa).

A chloroplast-targeting transit peptide spans 1-50; sequence MDLISVLPSTSKSCVCLHKPLSSSTHKLKPFCRTIRILGMPRPRKSVLMA. Mg(2+) is bound by residues aspartate 378, aspartate 382, and aspartate 530. The DDXXD motif signature appears at 378–382; the sequence is DDMYD.

The protein belongs to the terpene synthase family. Tpsd subfamily. Mg(2+) is required as a cofactor. Mn(2+) serves as cofactor.

The protein localises to the plastid. It localises to the chloroplast. The catalysed reaction is (2E)-geranyl diphosphate = (1S,5S)-beta-pinene + diphosphate. It carries out the reaction (2E)-geranyl diphosphate = (1S,5S)-alpha-pinene + diphosphate. It functions in the pathway terpene metabolism; oleoresin biosynthesis. Its pathway is secondary metabolite biosynthesis; terpenoid biosynthesis. Monoterpene synthase (TPS) involved in the biosynthesis of monoterpene natural products included in conifer oleoresin secretions and volatile emissions; these compounds contribute to biotic and abiotic stress defense against herbivores and pathogens. Catalyzes the conversion of (2E)-geranyl diphosphate (GPP) to (-)-beta-pinene and, to a lower extent, to (-)-alpha-pinene. In Pinus contorta (Shore pine), this protein is (-)-beta-pinene synthase 1, chloroplastic.